Reading from the N-terminus, the 123-residue chain is Large ribosomal subunit protein uL14 (123 aa).

This sequence belongs to the universal ribosomal protein uL14 family. Part of the 50S ribosomal subunit. Forms a cluster with proteins L3 and L19. In the 70S ribosome, L14 and L19 interact and together make contacts with the 16S rRNA in bridges B5 and B8.

In terms of biological role, binds to 23S rRNA. Forms part of two intersubunit bridges in the 70S ribosome. This Aliivibrio fischeri (strain ATCC 700601 / ES114) (Vibrio fischeri) protein is Large ribosomal subunit protein uL14.